We begin with the raw amino-acid sequence, 496 residues long: MDDKQHTSSSDDERAEIATSNQDQETNSSKRVHLKRWQFISILIGTILITAVITVVAYIFINQKISGLNKTDQANLNKIENVYKILNSDYYKKQDSDKLSKAAIDGMVKELKDPYSEYLTKEQTKSFNEGVSGDFVGIGAEMQKKNDQIMVTSPMKGSPAERAGIRPKDVITKVNGKSIKGKALDEVVKDVRGKENTEVTLTVQRGSEEKDVKIKREKIHVKSVEYKKKGKVGVITINKFQNDTSGELKDAVLKAHKDGLKKIVLDLRNNPGGLLDEAVKMANIFIDKGKTVVKLEKGKDTEAIQTSNDALKEAKDMDISILVNEGSASASEVFTGALKDYNKAKVYGSKTFGKGVVQTTREFKDGSLLKYTEMKWLTPDGHYIHGKGIKPDVTIDTPKYQSLNVIPNTKTFKVGDDDKNIKTIKIGLSALGYKVDNETTQFDQALENQVKAFQQANKLEVTGEFNKETNNKFTELLVEKANKHDDVLDKLINILK.

Residues Met1–Glu16 are compositionally biased toward basic and acidic residues. The tract at residues Met1–Asn27 is disordered. Positions Ala18–Asn27 are enriched in polar residues. A helical transmembrane segment spans residues Phe39–Ile59. A PDZ domain is found at Thr124–Gly206. Catalysis depends on charge relay system residues Ser329, Asp340, and Lys354.

It belongs to the peptidase S41A family.

It is found in the cell membrane. The sequence is that of Probable CtpA-like serine protease from Staphylococcus aureus (strain MSSA476).